We begin with the raw amino-acid sequence, 387 residues long: 1-deoxy-D-xylulose 5-phosphate reductoisomerase (387 aa).

NADPH is bound by residues Thr-10, Gly-11, Ser-12, Ile-13, and Asn-124. Lys-125 contacts 1-deoxy-D-xylulose 5-phosphate. Glu-126 contacts NADPH. Mn(2+) is bound at residue Asp-150. 1-deoxy-D-xylulose 5-phosphate-binding residues include Ser-151, Glu-152, Ser-176, and His-199. Glu-152 is a binding site for Mn(2+). An NADPH-binding site is contributed by Gly-205. The 1-deoxy-D-xylulose 5-phosphate site is built by Ser-212, Asn-217, Lys-218, and Glu-221. Glu-221 contributes to the Mn(2+) binding site.

This sequence belongs to the DXR family. Mg(2+) is required as a cofactor. Requires Mn(2+) as cofactor.

It catalyses the reaction 2-C-methyl-D-erythritol 4-phosphate + NADP(+) = 1-deoxy-D-xylulose 5-phosphate + NADPH + H(+). It functions in the pathway isoprenoid biosynthesis; isopentenyl diphosphate biosynthesis via DXP pathway; isopentenyl diphosphate from 1-deoxy-D-xylulose 5-phosphate: step 1/6. Functionally, catalyzes the NADPH-dependent rearrangement and reduction of 1-deoxy-D-xylulose-5-phosphate (DXP) to 2-C-methyl-D-erythritol 4-phosphate (MEP). The chain is 1-deoxy-D-xylulose 5-phosphate reductoisomerase from Clostridium beijerinckii (strain ATCC 51743 / NCIMB 8052) (Clostridium acetobutylicum).